The following is an 82-amino-acid chain: MRLVACLVFLASFALVCQGQVYKGGYTRPIPRPPPFVRPLPGGPIGPYNGCPISCRGISFSQARSCCSRLGRCCHVGKGYSG.

Residues 1–19 (MRLVACLVFLASFALVCQG) form the signal peptide. Pyrrolidone carboxylic acid is present on glutamine 20. 3 disulfides stabilise this stretch: cysteine 51/cysteine 66, cysteine 55/cysteine 73, and cysteine 67/cysteine 74. Serine amide is present on serine 81.

It belongs to the penaeidin family.

The protein localises to the cytoplasmic granule. In terms of biological role, antibacterial and antifungal activity. Presents chitin-binding activity. The sequence is that of Penaeidin-3f from Penaeus vannamei (Whiteleg shrimp).